Reading from the N-terminus, the 172-residue chain is NADH-ubiquinone oxidoreductase chain 6 (172 aa).

A run of 5 helical transmembrane segments spans residues 1-21 (MTYF…AVAS), 27-47 (YGVV…LSLG), 48-68 (VSFV…VVFV), 87-107 (VVGY…VGGF), and 138-158 (CGVG…FVVL).

The protein belongs to the complex I subunit 6 family.

The protein resides in the mitochondrion membrane. The catalysed reaction is a ubiquinone + NADH + 5 H(+)(in) = a ubiquinol + NAD(+) + 4 H(+)(out). Functionally, core subunit of the mitochondrial membrane respiratory chain NADH dehydrogenase (Complex I) that is believed to belong to the minimal assembly required for catalysis. Complex I functions in the transfer of electrons from NADH to the respiratory chain. The immediate electron acceptor for the enzyme is believed to be ubiquinone. The polypeptide is NADH-ubiquinone oxidoreductase chain 6 (MT-ND6) (Uria lomvia (Thick-billed murre)).